The chain runs to 1434 residues: Probable ATP-dependent DNA helicase HFM1 (1434 aa).

Positions 289–476 (DDLLYTDRNF…WLSDGERPAV (188 aa)) constitute a Helicase ATP-binding domain. 302-309 (APTGSGKT) lines the ATP pocket. Residues 410–413 (DEVH) carry the DEAH box motif. The Helicase C-terminal domain maps to 514-718 (KVYSVIRTYS…DVNIALDWIR (205 aa)). The SEC63 domain maps to 775-1089 (PTEAGRLMAW…VGLDIHQKFT (315 aa)). Residues 1110-1130 (TDISHSDYSGRATATGSSKGM) form a disordered region. The C4-type zinc-finger motif lies at 1141–1156 (CHHHCKNKHACGHDCC). A disordered region spans residues 1294 to 1333 (GFGDTRDSSLGGSKLPFQKSSSRFQRDNSNSFASSPGKPD). Polar residues predominate over residues 1311–1327 (QKSSSRFQRDNSNSFAS).

The protein belongs to the helicase family. SKI2 subfamily. Requires Zn(2+) as cofactor.

It carries out the reaction Couples ATP hydrolysis with the unwinding of duplex DNA by translocating in the 3'-5' direction.. The enzyme catalyses ATP + H2O = ADP + phosphate + H(+). Functionally, required for crossover formation and complete synapsis of homologous chromosomes during meiosis. The polypeptide is Probable ATP-dependent DNA helicase HFM1 (Mus musculus (Mouse)).